Here is a 338-residue protein sequence, read N- to C-terminus: tRNA-specific 2-thiouridylase MnmA (338 aa).

ATP is bound by residues 6–13 (ALSGGVDS) and Met-32. Residue Cys-92 is the Nucleophile of the active site. A disulfide bridge connects residues Cys-92 and Cys-186. ATP is bound at residue Gly-116. The segment at 134–136 (KDQ) is interaction with tRNA. Cys-186 serves as the catalytic Cysteine persulfide intermediate. The interaction with tRNA stretch occupies residues 288–289 (RY).

This sequence belongs to the MnmA/TRMU family.

The protein resides in the cytoplasm. The enzyme catalyses S-sulfanyl-L-cysteinyl-[protein] + uridine(34) in tRNA + AH2 + ATP = 2-thiouridine(34) in tRNA + L-cysteinyl-[protein] + A + AMP + diphosphate + H(+). In terms of biological role, catalyzes the 2-thiolation of uridine at the wobble position (U34) of tRNA, leading to the formation of s(2)U34. The chain is tRNA-specific 2-thiouridylase MnmA from Campylobacter fetus subsp. fetus (strain 82-40).